A 493-amino-acid polypeptide reads, in one-letter code: Glycerol kinase 2 (493 aa).

S12 is a binding site for ADP. ATP is bound by residues S12 and T13. Sn-glycerol 3-phosphate is bound at residue S12. K16 lines the ADP pocket. Residues R82, E83, Y134, and D243 each coordinate sn-glycerol 3-phosphate. Positions 82, 83, 134, 243, and 244 each coordinate glycerol. ADP-binding residues include T265 and G308. Residues T265, G308, and N312 each coordinate ATP. N413 is an ADP binding site.

Belongs to the FGGY kinase family. Homotetramer and homodimer (in equilibrium).

The enzyme catalyses glycerol + ATP = sn-glycerol 3-phosphate + ADP + H(+). It functions in the pathway polyol metabolism; glycerol degradation via glycerol kinase pathway; sn-glycerol 3-phosphate from glycerol: step 1/1. With respect to regulation, activated by phosphorylation and inhibited by fructose 1,6-bisphosphate (FBP). Functionally, key enzyme in the regulation of glycerol uptake and metabolism. Catalyzes the phosphorylation of glycerol to yield sn-glycerol 3-phosphate. The protein is Glycerol kinase 2 of Clostridium tetani (strain Massachusetts / E88).